A 294-amino-acid polypeptide reads, in one-letter code: MALSLDDLPEKPAPAEPVSAPVGRRVQASLVFARGGGTTVLSRQVVPYPFHITRAFRMHPESPDLATLYLQSASGGLYAADHLTLDIAARPGARVHVTTQAGTVVHRGGPEPTRQDTRLAIAADAFLALNPDPLILFPGAHLAVSTDITAEPGARAIVTESVACHDPLGQDRPFDRLDLGLTIRTPEGRALVRERSRIDGAAFVGPDSPMGGHRAYGTMVVLGAPEDARLAGPLLRQASDTAGCLTGVSVLPNGAGLGLRLLAPDGGTLSAGMEAVFRIVFEALSGCGPGRRRK.

The segment at 1-20 (MALSLDDLPEKPAPAEPVSA) is disordered.

Belongs to the UreD family. As to quaternary structure, ureD, UreF and UreG form a complex that acts as a GTP-hydrolysis-dependent molecular chaperone, activating the urease apoprotein by helping to assemble the nickel containing metallocenter of UreC. The UreE protein probably delivers the nickel.

Its subcellular location is the cytoplasm. Functionally, required for maturation of urease via the functional incorporation of the urease nickel metallocenter. The protein is Urease accessory protein UreD 1 of Methylorubrum populi (strain ATCC BAA-705 / NCIMB 13946 / BJ001) (Methylobacterium populi).